Here is a 172-residue protein sequence, read N- to C-terminus: Disulfide bond formation protein B (172 aa).

Topologically, residues 1-13 (MNWLAQLPTQRTP) are cytoplasmic. The chain crosses the membrane as a helical span at residues 14 to 30 (WLLFSGIVFLLEITALF). Topologically, residues 31–48 (FQYKMGLAPCIMCIYQRT) are periplasmic. Residues C40 and C43 are joined by a disulfide bond. A helical transmembrane segment spans residues 49–64 (AVLGLLIAGIIGTSNP). Residues 65–71 (EHRGVRL) lie on the Cytoplasmic side of the membrane. A helical transmembrane segment spans residues 72–89 (LAYSVWAVSSVWGFIIAR). The Periplasmic segment spans residues 90–145 (EHIEMQTTTDPFAFSCEFEPNFPAFMPLHEWIPSFFAATGDCGNIDWQFAGLSMPA). Cysteines 105 and 131 form a disulfide. The helical transmembrane segment at 146-164 (WMEVIFALFAATLFLLVTS) threads the bilayer. The Cytoplasmic portion of the chain corresponds to 165 to 172 (RLMTKRSL).

Belongs to the DsbB family.

The protein localises to the cell inner membrane. In terms of biological role, required for disulfide bond formation in some periplasmic proteins. Acts by oxidizing the DsbA protein. This chain is Disulfide bond formation protein B, found in Pseudoalteromonas translucida (strain TAC 125).